A 396-amino-acid polypeptide reads, in one-letter code: Cathepsin D (396 aa).

Positions M1–A18 are cleaved as a signal peptide. The propeptide at I19–N61 is activation peptide. The region spanning Y76–A393 is the Peptidase A1 domain. Residue D94 is part of the active site. An intrachain disulfide couples C107 to C114. N131 is a glycosylation site (N-linked (GlcNAc...) asparagine). C272 and C276 form a disulfide bridge. D281 is a catalytic residue. C315 and C352 are disulfide-bonded.

It belongs to the peptidase A1 family. In terms of assembly, monomer.

It is found in the lysosome. It carries out the reaction Specificity similar to, but narrower than, that of pepsin A. Does not cleave the 4-Gln-|-His-5 bond in B chain of insulin.. Inhibited by pepstatin. Acid protease active in intracellular protein breakdown. This is Cathepsin D (ctsd) from Clupea harengus (Atlantic herring).